A 448-amino-acid polypeptide reads, in one-letter code: Probable glycine dehydrogenase (decarboxylating) subunit 1 (448 aa).

The protein belongs to the GcvP family. N-terminal subunit subfamily. The glycine cleavage system is composed of four proteins: P, T, L and H. In this organism, the P 'protein' is a heterodimer of two subunits.

It catalyses the reaction N(6)-[(R)-lipoyl]-L-lysyl-[glycine-cleavage complex H protein] + glycine + H(+) = N(6)-[(R)-S(8)-aminomethyldihydrolipoyl]-L-lysyl-[glycine-cleavage complex H protein] + CO2. Functionally, the glycine cleavage system catalyzes the degradation of glycine. The P protein binds the alpha-amino group of glycine through its pyridoxal phosphate cofactor; CO(2) is released and the remaining methylamine moiety is then transferred to the lipoamide cofactor of the H protein. The protein is Probable glycine dehydrogenase (decarboxylating) subunit 1 of Staphylococcus aureus (strain COL).